Reading from the N-terminus, the 361-residue chain is S-adenosylmethionine:tRNA ribosyltransferase-isomerase (361 aa).

Belongs to the QueA family. Monomer.

The protein localises to the cytoplasm. It catalyses the reaction 7-aminomethyl-7-carbaguanosine(34) in tRNA + S-adenosyl-L-methionine = epoxyqueuosine(34) in tRNA + adenine + L-methionine + 2 H(+). The protein operates within tRNA modification; tRNA-queuosine biosynthesis. Transfers and isomerizes the ribose moiety from AdoMet to the 7-aminomethyl group of 7-deazaguanine (preQ1-tRNA) to give epoxyqueuosine (oQ-tRNA). This Afipia carboxidovorans (strain ATCC 49405 / DSM 1227 / KCTC 32145 / OM5) (Oligotropha carboxidovorans) protein is S-adenosylmethionine:tRNA ribosyltransferase-isomerase.